The following is a 1072-amino-acid chain: DNA-directed RNA polymerase subunit beta (1072 aa).

Belongs to the RNA polymerase beta chain family. In plastids the minimal PEP RNA polymerase catalytic core is composed of four subunits: alpha, beta, beta', and beta''. When a (nuclear-encoded) sigma factor is associated with the core the holoenzyme is formed, which can initiate transcription.

It is found in the plastid. The protein resides in the chloroplast. It catalyses the reaction RNA(n) + a ribonucleoside 5'-triphosphate = RNA(n+1) + diphosphate. In terms of biological role, DNA-dependent RNA polymerase catalyzes the transcription of DNA into RNA using the four ribonucleoside triphosphates as substrates. The sequence is that of DNA-directed RNA polymerase subunit beta from Arabis hirsuta (Hairy rock-cress).